The chain runs to 91 residues: Large ribosomal subunit protein bL27 (91 aa).

The segment at 1–22 is disordered; it reads MAHKKAGGSSRNGRDSDGRRLG.

It belongs to the bacterial ribosomal protein bL27 family.

The sequence is that of Large ribosomal subunit protein bL27 from Beijerinckia indica subsp. indica (strain ATCC 9039 / DSM 1715 / NCIMB 8712).